The primary structure comprises 267 residues: Hydroxyacylglutathione hydrolase (267 aa).

H55, H57, D59, H60, H121, D138, and H176 together coordinate Zn(2+).

The protein belongs to the metallo-beta-lactamase superfamily. Glyoxalase II family. In terms of assembly, monomer. Zn(2+) is required as a cofactor.

The catalysed reaction is an S-(2-hydroxyacyl)glutathione + H2O = a 2-hydroxy carboxylate + glutathione + H(+). It participates in secondary metabolite metabolism; methylglyoxal degradation; (R)-lactate from methylglyoxal: step 2/2. Thiolesterase that catalyzes the hydrolysis of S-D-lactoyl-glutathione to form glutathione and D-lactic acid. The protein is Hydroxyacylglutathione hydrolase of Shewanella sp. (strain ANA-3).